A 604-amino-acid chain; its full sequence is Elongation factor 4 1 (604 aa).

A tr-type G domain is found at 10-191 (EHIRNFCIIA…AIVDSVPAPT (182 aa)). Residues 22–27 (DHGKST) and 138–141 (NKID) contribute to the GTP site.

It belongs to the TRAFAC class translation factor GTPase superfamily. Classic translation factor GTPase family. LepA subfamily.

The protein localises to the cell inner membrane. The enzyme catalyses GTP + H2O = GDP + phosphate + H(+). Its function is as follows. Required for accurate and efficient protein synthesis under certain stress conditions. May act as a fidelity factor of the translation reaction, by catalyzing a one-codon backward translocation of tRNAs on improperly translocated ribosomes. Back-translocation proceeds from a post-translocation (POST) complex to a pre-translocation (PRE) complex, thus giving elongation factor G a second chance to translocate the tRNAs correctly. Binds to ribosomes in a GTP-dependent manner. The polypeptide is Elongation factor 4 1 (Rhodopirellula baltica (strain DSM 10527 / NCIMB 13988 / SH1)).